The sequence spans 328 residues: Malate dehydrogenase (328 aa).

Gly-12–Gly-18 is a binding site for NAD(+). Positions 93 and 99 each coordinate substrate. Residues Asn-106, Gln-113, and Val-130–Asn-132 contribute to the NAD(+) site. Substrate is bound by residues Asn-132 and Arg-163. His-188 functions as the Proton acceptor in the catalytic mechanism.

It belongs to the LDH/MDH superfamily. MDH type 2 family.

It catalyses the reaction (S)-malate + NAD(+) = oxaloacetate + NADH + H(+). Its function is as follows. Catalyzes the reversible oxidation of malate to oxaloacetate. This is Malate dehydrogenase from Saccharopolyspora erythraea (strain ATCC 11635 / DSM 40517 / JCM 4748 / NBRC 13426 / NCIMB 8594 / NRRL 2338).